The following is a 74-amino-acid chain: Kappa-scoloptoxin(07)-Ssm2a (74 aa).

The first 19 residues, 1 to 19 (MLVFYALLFVTVFSNTVMG), serve as a signal peptide directing secretion. Positions 20–41 (ATIDKPIPKPILREAIEEIEVN) are excised as a propeptide.

This sequence belongs to the scoloptoxin-07 family. Contains 3 disulfide bonds. Expressed by the venom gland.

The protein resides in the secreted. Toxin that inhibits voltage-gated potassium channel currents in DRG neurons (IC(50)=about 570 nM). In vivo, induces neurotoxicity shown by twitching, paralysis, and body contraction. In vivo, insects injected with this toxin showed signs of neurotoxicity including twitching, paralysis, and body contraction. The polypeptide is Kappa-scoloptoxin(07)-Ssm2a (Scolopendra mutilans (Chinese red-headed centipede)).